Here is a 265-residue protein sequence, read N- to C-terminus: Protein HesA, vegetative (265 aa).

Belongs to the HesA/MoeB/ThiF family.

The sequence is that of Protein HesA, vegetative (hesA2) from Trichormus variabilis (strain ATCC 29413 / PCC 7937) (Anabaena variabilis).